The following is a 320-amino-acid chain: MGDIPAVGLSCWKASPGKVTEAVKVAIDAGYRHFNCAYFYHNEKEVGAGIRYKIKEGAVRREDLFIASKLWCTCHKKSLVKTACRRSLKALKLNYLDLYLIHWPMGFKPPHPEWIMSCSELSFCLSHPGVHDLPLDESDMVIPGDTDFLDTWEAMEDLVITGLVKNIGVSNFNHEQLERLLNKPGLRFKPVTNQIECHPYLTQKNLISFCQSRGVSVTAYRPLGGSCEGVDLIDDPVIQRIAKEHSKSPAQILIRFQTQRNVIVIPGSITPSHIKENIQVFDFELTQHDMDNILSLDRNLRLATFPITKNHKDYPFHIEY.

The active-site Proton donor is Tyr40. His102 serves as a coordination point for substrate. NADP(+) contacts are provided by residues Gln194 and 265 to 277 (IPGS…IKEN).

This sequence belongs to the aldo/keto reductase family. Monomer.

The protein localises to the cytoplasm. It carries out the reaction 1,5-anhydro-D-glucitol + NADP(+) = 1,5-anhydro-D-fructose + NADPH + H(+). With respect to regulation, inhibited by p-chloromercuribenzoic acid and alkyliodines. Its function is as follows. Catalyzes the NADPH-dependent reduction of 1,5-anhydro-D-fructose (AF) to 1,5-anhydro-D-glucitol. In Macaca fascicularis (Crab-eating macaque), this protein is 1,5-anhydro-D-fructose reductase (AKR1E2).